The primary structure comprises 353 residues: Photosystem II protein D1 (353 aa).

Thr2 is subject to N-acetylthreonine. Thr2 is subject to Phosphothreonine. The next 3 membrane-spanning stretches (helical) occupy residues 29–46, 118–133, and 142–156; these read YIGW…TATS, HFLL…EWEL, and WIAV…AATA. A chlorophyll a-binding site is contributed by His118. Tyr126 provides a ligand contact to pheophytin a. Asp170 and Glu189 together coordinate [CaMn4O5] cluster. Residues 197-218 form a helical membrane-spanning segment; sequence FHMLGVAGVFGGSLFSAMHGSL. His198 serves as a coordination point for chlorophyll a. A quinone contacts are provided by residues His215 and 264–265; that span reads SF. Fe cation is bound at residue His215. His272 contacts Fe cation. The helical transmembrane segment at 274 to 288 threads the bilayer; it reads FLAAWPVVGIWFTAL. Residues His332, Glu333, Asp342, and Ala344 each coordinate [CaMn4O5] cluster. Residues 345–353 constitute a propeptide that is removed on maturation; that stretch reads VVEAPSTNG.

It belongs to the reaction center PufL/M/PsbA/D family. As to quaternary structure, PSII is composed of 1 copy each of membrane proteins PsbA, PsbB, PsbC, PsbD, PsbE, PsbF, PsbH, PsbI, PsbJ, PsbK, PsbL, PsbM, PsbT, PsbX, PsbY, PsbZ, Psb30/Ycf12, at least 3 peripheral proteins of the oxygen-evolving complex and a large number of cofactors. It forms dimeric complexes. Requires The D1/D2 heterodimer binds P680, chlorophylls that are the primary electron donor of PSII, and subsequent electron acceptors. It shares a non-heme iron and each subunit binds pheophytin, quinone, additional chlorophylls, carotenoids and lipids. D1 provides most of the ligands for the Mn4-Ca-O5 cluster of the oxygen-evolving complex (OEC). There is also a Cl(-1) ion associated with D1 and D2, which is required for oxygen evolution. The PSII complex binds additional chlorophylls, carotenoids and specific lipids. as cofactor. In terms of processing, tyr-161 forms a radical intermediate that is referred to as redox-active TyrZ, YZ or Y-Z. C-terminally processed by CTPA; processing is essential to allow assembly of the oxygen-evolving complex and thus photosynthetic growth.

It is found in the plastid. The protein resides in the chloroplast thylakoid membrane. It catalyses the reaction 2 a plastoquinone + 4 hnu + 2 H2O = 2 a plastoquinol + O2. Photosystem II (PSII) is a light-driven water:plastoquinone oxidoreductase that uses light energy to abstract electrons from H(2)O, generating O(2) and a proton gradient subsequently used for ATP formation. It consists of a core antenna complex that captures photons, and an electron transfer chain that converts photonic excitation into a charge separation. The D1/D2 (PsbA/PsbD) reaction center heterodimer binds P680, the primary electron donor of PSII as well as several subsequent electron acceptors. This is Photosystem II protein D1 from Aethionema grandiflorum (Persian stone-cress).